Here is a 265-residue protein sequence, read N- to C-terminus: MSRIAQTFSQLSAQGRKGLIPFITAGDPYPELTVDLMHALVKGGANVIELGVPFSDPMADGPVIQRASERALAKKIGLRTVLDYVRAFRATDKTTPVVLMGYANPIERMGIDAFAKAASEAGVDGVLVVDYPPEECEAFAKTMRAAGIDPIFLLAPTSTEARMAQIARVASGYIYYVSLKGVTGAATLDLDSVAARIPQIRQHARLPVGVGFGIRDAATARAIGGVADAVVIGSRIVQLLEEASREQAVQCLTDFIADIRQALDA.

Active-site proton acceptor residues include E49 and D60.

It belongs to the TrpA family. As to quaternary structure, tetramer of two alpha and two beta chains.

It carries out the reaction (1S,2R)-1-C-(indol-3-yl)glycerol 3-phosphate + L-serine = D-glyceraldehyde 3-phosphate + L-tryptophan + H2O. It functions in the pathway amino-acid biosynthesis; L-tryptophan biosynthesis; L-tryptophan from chorismate: step 5/5. Its function is as follows. The alpha subunit is responsible for the aldol cleavage of indoleglycerol phosphate to indole and glyceraldehyde 3-phosphate. This Ralstonia nicotianae (strain ATCC BAA-1114 / GMI1000) (Ralstonia solanacearum) protein is Tryptophan synthase alpha chain.